The primary structure comprises 301 residues: Probable alpha-L-glutamate ligase 1 (301 aa).

Residues 104 to 287 (MQLMSRRGIG…VAGAIIDFVE (184 aa)) enclose the ATP-grasp domain. ATP-binding positions include K141, 178-179 (EY), D187, and 211-213 (RSN). D248, E260, and N262 together coordinate Mg(2+). Mn(2+)-binding residues include D248, E260, and N262.

It belongs to the RimK family. The cofactor is Mg(2+). Mn(2+) serves as cofactor.

The polypeptide is Probable alpha-L-glutamate ligase 1 (Shewanella baltica (strain OS185)).